A 392-amino-acid polypeptide reads, in one-letter code: Formate-dependent phosphoribosylglycinamide formyltransferase (392 aa).

Residues 22 to 23 (EL) and Glu82 contribute to the N(1)-(5-phospho-beta-D-ribosyl)glycinamide site. Residues Arg114, Lys155, 160-165 (SSGKGQ), 195-198 (EGVV), and Glu203 contribute to the ATP site. Residues 119 to 308 (RLAAEELGLP…EFALHVRAFL (190 aa)) enclose the ATP-grasp domain. Mg(2+) contacts are provided by Glu267 and Glu279. Residues Asp286, Lys355, and 362–363 (RR) each bind N(1)-(5-phospho-beta-D-ribosyl)glycinamide.

This sequence belongs to the PurK/PurT family. Homodimer.

It catalyses the reaction N(1)-(5-phospho-beta-D-ribosyl)glycinamide + formate + ATP = N(2)-formyl-N(1)-(5-phospho-beta-D-ribosyl)glycinamide + ADP + phosphate + H(+). Its pathway is purine metabolism; IMP biosynthesis via de novo pathway; N(2)-formyl-N(1)-(5-phospho-D-ribosyl)glycinamide from N(1)-(5-phospho-D-ribosyl)glycinamide (formate route): step 1/1. In terms of biological role, involved in the de novo purine biosynthesis. Catalyzes the transfer of formate to 5-phospho-ribosyl-glycinamide (GAR), producing 5-phospho-ribosyl-N-formylglycinamide (FGAR). Formate is provided by PurU via hydrolysis of 10-formyl-tetrahydrofolate. The chain is Formate-dependent phosphoribosylglycinamide formyltransferase from Salmonella schwarzengrund (strain CVM19633).